Here is a 629-residue protein sequence, read N- to C-terminus: DNA ligase B (629 aa).

Lys151 serves as the catalytic N6-AMP-lysine intermediate. Over residues 588–597 the composition is skewed to polar residues; sequence LQKQHGTNTR. The tract at residues 588 to 629 is disordered; the sequence is LQKQHGTNTRNEQKGDVRRVDVKQDNGTTWLPEQDSNLRPND. The segment covering 598–611 has biased composition (basic and acidic residues); it reads NEQKGDVRRVDVKQ. Polar residues predominate over residues 612–629; that stretch reads DNGTTWLPEQDSNLRPND.

It belongs to the NAD-dependent DNA ligase family. LigB subfamily.

The enzyme catalyses NAD(+) + (deoxyribonucleotide)n-3'-hydroxyl + 5'-phospho-(deoxyribonucleotide)m = (deoxyribonucleotide)n+m + AMP + beta-nicotinamide D-nucleotide.. Catalyzes the formation of phosphodiester linkages between 5'-phosphoryl and 3'-hydroxyl groups in double-stranded DNA using NAD as a coenzyme and as the energy source for the reaction. The chain is DNA ligase B from Chromohalobacter salexigens (strain ATCC BAA-138 / DSM 3043 / CIP 106854 / NCIMB 13768 / 1H11).